A 228-amino-acid polypeptide reads, in one-letter code: 5'-methylthioadenosine/S-adenosylhomocysteine nucleosidase (228 aa).

The active-site Proton acceptor is the Glu11. Substrate is bound by residues Gly77, Ile151, and 172-173 (ME). Catalysis depends on Asp196, which acts as the Proton donor.

Belongs to the PNP/UDP phosphorylase family. MtnN subfamily.

The catalysed reaction is S-adenosyl-L-homocysteine + H2O = S-(5-deoxy-D-ribos-5-yl)-L-homocysteine + adenine. The enzyme catalyses S-methyl-5'-thioadenosine + H2O = 5-(methylsulfanyl)-D-ribose + adenine. It catalyses the reaction 5'-deoxyadenosine + H2O = 5-deoxy-D-ribose + adenine. Its pathway is amino-acid biosynthesis; L-methionine biosynthesis via salvage pathway; S-methyl-5-thio-alpha-D-ribose 1-phosphate from S-methyl-5'-thioadenosine (hydrolase route): step 1/2. Catalyzes the irreversible cleavage of the glycosidic bond in both 5'-methylthioadenosine (MTA) and S-adenosylhomocysteine (SAH/AdoHcy) to adenine and the corresponding thioribose, 5'-methylthioribose and S-ribosylhomocysteine, respectively. Also cleaves 5'-deoxyadenosine, a toxic by-product of radical S-adenosylmethionine (SAM) enzymes, into 5-deoxyribose and adenine. This Staphylococcus epidermidis (strain ATCC 12228 / FDA PCI 1200) protein is 5'-methylthioadenosine/S-adenosylhomocysteine nucleosidase.